The primary structure comprises 388 residues: Dual-specificity RNA methyltransferase RlmN (388 aa).

Glutamate 109 (proton acceptor) is an active-site residue. Residues glutamate 115–aspartate 354 form the Radical SAM core domain. A disulfide bond links cysteine 122 and cysteine 359. The [4Fe-4S] cluster site is built by cysteine 129, cysteine 133, and cysteine 136. S-adenosyl-L-methionine-binding positions include glycine 183–glutamate 184, serine 215, serine 237–histidine 239, and asparagine 316. Cysteine 359 (S-methylcysteine intermediate) is an active-site residue.

Belongs to the radical SAM superfamily. RlmN family. It depends on [4Fe-4S] cluster as a cofactor.

It is found in the cytoplasm. The catalysed reaction is adenosine(2503) in 23S rRNA + 2 reduced [2Fe-2S]-[ferredoxin] + 2 S-adenosyl-L-methionine = 2-methyladenosine(2503) in 23S rRNA + 5'-deoxyadenosine + L-methionine + 2 oxidized [2Fe-2S]-[ferredoxin] + S-adenosyl-L-homocysteine. The enzyme catalyses adenosine(37) in tRNA + 2 reduced [2Fe-2S]-[ferredoxin] + 2 S-adenosyl-L-methionine = 2-methyladenosine(37) in tRNA + 5'-deoxyadenosine + L-methionine + 2 oxidized [2Fe-2S]-[ferredoxin] + S-adenosyl-L-homocysteine. Specifically methylates position 2 of adenine 2503 in 23S rRNA and position 2 of adenine 37 in tRNAs. m2A2503 modification seems to play a crucial role in the proofreading step occurring at the peptidyl transferase center and thus would serve to optimize ribosomal fidelity. This Salmonella arizonae (strain ATCC BAA-731 / CDC346-86 / RSK2980) protein is Dual-specificity RNA methyltransferase RlmN.